We begin with the raw amino-acid sequence, 38 residues long: Small ribosomal subunit protein eS32 (38 aa).

Belongs to the eukaryotic ribosomal protein eS32 family. Component of the small ribosomal subunit (SSU).

The protein is Small ribosomal subunit protein eS32 (rpl41e) of Methanocaldococcus jannaschii (strain ATCC 43067 / DSM 2661 / JAL-1 / JCM 10045 / NBRC 100440) (Methanococcus jannaschii).